Reading from the N-terminus, the 483-residue chain is UDP-N-acetylmuramyl-tripeptide synthetase (483 aa).

UDP-N-acetyl-alpha-D-muramoyl-L-alanyl-D-glutamate is bound at residue serine 43. Position 116-122 (116-122 (GTKGKTT)) interacts with ATP. UDP-N-acetyl-alpha-D-muramoyl-L-alanyl-D-glutamate is bound by residues 160 to 161 (TT), serine 187, and arginine 195. Residue lysine 229 is modified to N6-carboxylysine.

It belongs to the MurCDEF family. MurE subfamily. Carboxylation is probably crucial for Mg(2+) binding and, consequently, for the gamma-phosphate positioning of ATP.

It localises to the cytoplasm. It participates in cell wall biogenesis; peptidoglycan biosynthesis. In terms of biological role, catalyzes the addition of an amino acid to the nucleotide precursor UDP-N-acetylmuramoyl-L-alanyl-D-glutamate (UMAG) in the biosynthesis of bacterial cell-wall peptidoglycan. This Lactococcus lactis subsp. cremoris (strain MG1363) protein is UDP-N-acetylmuramyl-tripeptide synthetase.